A 172-amino-acid chain; its full sequence is Large ribosomal subunit protein bL17 (172 aa).

A compositionally biased stretch (basic and acidic residues) spans 140–160 (LKAEAKAKREEKKPAKKEEKP). The disordered stretch occupies residues 140–172 (LKAEAKAKREEKKPAKKEEKPKKAKKEKAAASN).

This sequence belongs to the bacterial ribosomal protein bL17 family. As to quaternary structure, part of the 50S ribosomal subunit. Contacts protein L32.

This Leptospira biflexa serovar Patoc (strain Patoc 1 / Ames) protein is Large ribosomal subunit protein bL17.